Consider the following 463-residue polypeptide: Hydrolase pyiE (463 aa).

The active-site Nucleophile is Ser252. A disordered region spans residues Lys350–Asp373.

This sequence belongs to the AB hydrolase superfamily. FUS2 hydrolase family. Homodimer.

Its pathway is mycotoxin biosynthesis. Hydrolyase; part of the gene cluster that mediates the biosynthesis of the mycotoxin pyrichalasin H, a tyrosine-derived cytochalasan that inhibits the growth of rice seedlings, but also inhibits lymphocyte capping and actin polymerization and alters cell morphology. Pyrichalasin H is indicated as the responsible agent for the genus-specific pathogenicity of M.grisea toward crabgrass. The first step in the pathway is catalyzed by the O-methyltransferase pyiA which methylates free tyrosine to generate the precursor O-methyltyrosine. The hybrid PKS-NRPS pyiS, assisted by the enoyl reductase pyiC, are responsible for fusion of the O-methyltyrosine precursor and the polyketide backbone. The polyketide synthase module (PKS) of pyiS is responsible for the synthesis of the polyketide backbone and the downstream nonribosomal peptide synthetase (NRPS) amidates the carboxyl end of the polyketide with the O-methyltyrosine precursor. As the NRPS A-domain demonstrates substrate tolerance, pyiS can also use phenylalanine, tyrosine and even para-chlorophenylalanine as amino acid precursor, which leads to the production of novel cytochalasans, including halogenated cytochalasans. Because pyiS lacks a designated enoylreductase (ER) domain, the required activity is provided the enoyl reductase pyiC. Reduction by the hydrolyase pyiE leads to 1,5-dihydropyrrolone, which is substrate for dehydration and intra-molecular Diels-Alder cyclization by the Diels-Alderase pyiF to yield the required isoindolone-fused macrocycle. The tailoring cytochrome P450 monooxygenases piyD and piyG catalyze the hydroxylation at C-18 and C-7, respectivily, whereas the short-chain dehydrogenase/reductase pyiH reduces the carbonyl at C-21 in preparation for the transfer of an acetyl group by the acetyltransferase pyiB. These 3 reactions whose order is not clear yet, lead to the production of O-methylpyrichalasin J, a deacetylated pyrichalasin H. Finally, pyiB to converts O-methylpyrichalasin J into the final product pyrichalasin H via acetylation of C-21. The sequence is that of Hydrolase pyiE from Pyricularia grisea (Crabgrass-specific blast fungus).